A 288-amino-acid chain; its full sequence is Glucose-1-phosphate thymidylyltransferase (288 aa).

Positions 108 and 223 each coordinate Mg(2+).

The protein belongs to the glucose-1-phosphate thymidylyltransferase family. As to quaternary structure, homotetramer. Mg(2+) serves as cofactor.

It carries out the reaction dTTP + alpha-D-glucose 1-phosphate + H(+) = dTDP-alpha-D-glucose + diphosphate. Catalyzes the formation of dTDP-glucose, from dTTP and glucose 1-phosphate, as well as its pyrophosphorolysis. This chain is Glucose-1-phosphate thymidylyltransferase (rmlA), found in Neisseria gonorrhoeae.